Here is a 496-residue protein sequence, read N- to C-terminus: Probable glycine betaine transporter (496 aa).

12 helical membrane passes run 11-31, 49-69, 89-109, 136-156, 188-208, 219-239, 260-280, 306-326, 341-361, 396-416, 441-461, and 468-488; these read TVLY…VFLP, FGWL…GIAI, FQWF…FWSV, VVFF…GLAL, AIDI…LGLG, IWGI…ITVI, VWLS…VFIL, WVGG…PFVG, FVFA…AIYG, LYAI…VGAA, FWGI…GTAA, and ASIA…YSIL.

Belongs to the BCCT transporter (TC 2.A.15) family.

It is found in the cell membrane. Functionally, probably acts in the uptake of glycine betaine. May function in the pathway that allows anaerobic methylotrophic growth of D.hafniense using glycine betaine. This is Probable glycine betaine transporter from Desulfitobacterium hafniense (strain Y51).